The primary structure comprises 298 residues: Probable 2-(5''-triphosphoribosyl)-3'-dephosphocoenzyme-A synthase 2 (298 aa).

The protein belongs to the CitG/MdcB family.

It catalyses the reaction 3'-dephospho-CoA + ATP = 2'-(5''-triphospho-alpha-D-ribosyl)-3'-dephospho-CoA + adenine. This Salmonella choleraesuis (strain SC-B67) protein is Probable 2-(5''-triphosphoribosyl)-3'-dephosphocoenzyme-A synthase 2.